The sequence spans 338 residues: Lumican (338 aa).

A signal peptide spans 1-18; the sequence is MSLSAFTLFLALIGGTSG. Position 19 is a pyrrolidone carboxylic acid (glutamine 19). Tyrosine 20, tyrosine 21, tyrosine 23, and tyrosine 30 each carry sulfotyrosine. Residues 28–66 enclose the LRRNT domain; sequence SIYGQSSPNCAPECNCPESYPSAMYCDELKLKSVPMVPP. 10 LRR repeats span residues 67–88, 91–114, 117–137, 138–159, 160–181, 185–205, 206–227, 230–253, 255–276, and 277–296; these read GIKYLYLRNNQIDHIDEKAFEN, DLQWLILDHNLLENSKIKGRVFSK, QLKKLHINHNNLTESVGPLPK, SLEDLQLTHNKITKLGSFEGLV, NLTFIHLQHNRLKEDAVSAAFK, SLEYLDLSFNQIARLPSGLPV, SLLTLYLDNNKISNIPDEYFKR, ALQYLRLSHNELADSGIPGNSFNV, SLVELDLSYNKLKNIPTVNENL, and ENYYLEVNQLEKFDIKSFCK. Asparagine 88 carries an N-linked (GlcNAc...) (keratan sulfate) asparagine glycan. Asparagine 127 carries N-linked (GlcNAc...) (keratan sulfate) asparagine glycosylation. A glycan (N-linked (GlcNAc...) (keratan sulfate) asparagine) is linked at asparagine 160. Asparagine 252 is a glycosylation site (N-linked (GlcNAc...) (keratan sulfate) asparagine). Cysteine 295 and cysteine 328 are joined by a disulfide. Serine 304 is modified (phosphoserine). One copy of the LRR 11 repeat lies at 305–326; it reads KIKHLRLDGNRISETSLPPDMY.

It belongs to the small leucine-rich proteoglycan (SLRP) family. SLRP class II subfamily. In terms of assembly, binds to laminin. Sulfated on tyrosine residue(s). Post-translationally, contains keratan sulfate. As to expression, cornea and other tissues.

It is found in the secreted. The protein localises to the extracellular space. The protein resides in the extracellular matrix. The sequence is that of Lumican (LUM) from Homo sapiens (Human).